The chain runs to 158 residues: C-type lectin BML-1 (158 aa).

The N-terminal stretch at Met1–Cys23 is a signal peptide. 4 disulfides stabilise this stretch: Cys26–Cys37, Cys54–Cys154, Cys61–Cys156, and Cys129–Cys146. The region spanning Lys33–Gln155 is the C-type lectin domain. Ca(2+) is bound by residues Gln119, Asp121, and Glu127. Residues Gln119–Asp121 carry the Galactose-binding motif. N-linked (GlcNAc...) asparagine glycosylation is present at Asn134. Ca(2+)-binding residues include Asn142 and Asp143.

Belongs to the true venom lectin family. In terms of assembly, homodimer; non-covalently linked. As to expression, expressed by the venom gland.

The protein resides in the secreted. Recombinant C-type lectin BML-1 is able to agglutinate erythrocytes. May be a calcium-dependent lectin. This Bungarus multicinctus (Many-banded krait) protein is C-type lectin BML-1.